A 463-amino-acid chain; its full sequence is Trigger factor (463 aa).

The PPIase FKBP-type domain occupies 162–243 (GDVVTLDLEA…VSQVAARELP (82 aa)). The disordered stretch occupies residues 427-463 (TNGEIVDLDDEDETESTPETTEAAEAAEESTEDKPEA). A compositionally biased stretch (acidic residues) spans 432–442 (VDLDDEDETES).

It belongs to the FKBP-type PPIase family. Tig subfamily.

It localises to the cytoplasm. The catalysed reaction is [protein]-peptidylproline (omega=180) = [protein]-peptidylproline (omega=0). Functionally, involved in protein export. Acts as a chaperone by maintaining the newly synthesized protein in an open conformation. Functions as a peptidyl-prolyl cis-trans isomerase. This Streptomyces avermitilis (strain ATCC 31267 / DSM 46492 / JCM 5070 / NBRC 14893 / NCIMB 12804 / NRRL 8165 / MA-4680) protein is Trigger factor.